We begin with the raw amino-acid sequence, 346 residues long: Ferredoxin--NADP reductase 1 (346 aa).

Residues glutamate 37, lysine 45, tyrosine 49, isoleucine 89, proline 124, aspartate 287, and serine 328 each contribute to the FAD site.

This sequence belongs to the ferredoxin--NADP reductase type 2 family. Homodimer. It depends on FAD as a cofactor.

The enzyme catalyses 2 reduced [2Fe-2S]-[ferredoxin] + NADP(+) + H(+) = 2 oxidized [2Fe-2S]-[ferredoxin] + NADPH. In Bacillus pumilus (strain SAFR-032), this protein is Ferredoxin--NADP reductase 1.